A 127-amino-acid polypeptide reads, in one-letter code: Large ribosomal subunit protein bL20 (127 aa).

The protein belongs to the bacterial ribosomal protein bL20 family.

Functionally, binds directly to 23S ribosomal RNA and is necessary for the in vitro assembly process of the 50S ribosomal subunit. It is not involved in the protein synthesizing functions of that subunit. In Corynebacterium jeikeium (strain K411), this protein is Large ribosomal subunit protein bL20.